The primary structure comprises 345 residues: L-threonine 3-dehydrogenase (345 aa).

Cys-39 provides a ligand contact to Zn(2+). Residues Thr-41 and His-44 each act as charge relay system in the active site. Residues His-64, Glu-65, Cys-94, Cys-97, Cys-100, and Cys-108 each coordinate Zn(2+). Residues Ile-176, Asp-196, Arg-201, Leu-263–Ile-265, and Val-287–Tyr-288 each bind NAD(+).

Belongs to the zinc-containing alcohol dehydrogenase family. As to quaternary structure, homotetramer. The cofactor is Zn(2+).

It is found in the cytoplasm. The catalysed reaction is L-threonine + NAD(+) = (2S)-2-amino-3-oxobutanoate + NADH + H(+). It functions in the pathway amino-acid degradation; L-threonine degradation via oxydo-reductase pathway; glycine from L-threonine: step 1/2. In terms of biological role, catalyzes the NAD(+)-dependent oxidation of L-threonine to 2-amino-3-ketobutyrate. The sequence is that of L-threonine 3-dehydrogenase from Anaeromyxobacter sp. (strain K).